A 310-amino-acid chain; its full sequence is Putative methyltransferase mtx subunit H (310 aa).

The protein belongs to the MtrH family. May be part of a complex composed of 3 subunits; MtxA, MtxH and MtxX.

The chain is Putative methyltransferase mtx subunit H (mtxH) from Methanosarcina barkeri (strain Fusaro / DSM 804).